An 84-amino-acid chain; its full sequence is Beta-cardiotoxin CTX14 (84 aa).

An N-terminal signal peptide occupies residues 1-21; that stretch reads MKTLLLTLVVVTIVCLDLGYT. Disulfide bonds link C24–C43, C36–C61, C65–C76, and C77–C82.

It belongs to the three-finger toxin family. Short-chain subfamily. Aminergic toxin sub-subfamily. As to expression, expressed by the venom gland.

The protein resides in the secreted. Functionally, acts as a beta-blocker by binding to beta-1 and beta-2 adrenergic receptors (ADRB1 and ADRB2). It dose-dependently decreases the heart rate (bradycardia), whereas conventional cardiotoxins increases it. At 100 mg/kg, intraperitoneal injection into mice provokes labored breathing, impaired locomotion, lack of response to external stimuli, and death (after 30 minutes). The chain is Beta-cardiotoxin CTX14 from Ophiophagus hannah (King cobra).